The following is a 740-amino-acid chain: Phosphoribosylformylglycinamidine synthase subunit PurL (740 aa).

Histidine 53 is a catalytic residue. ATP-binding residues include tyrosine 56 and lysine 95. Residue glutamate 97 coordinates Mg(2+). Substrate contacts are provided by residues 98–101 and arginine 120; that span reads SHNH. Residue histidine 99 is the Proton acceptor of the active site. Residue aspartate 121 participates in Mg(2+) binding. Position 244 (glutamine 244) interacts with substrate. Aspartate 274 is a Mg(2+) binding site. 318-320 contacts substrate; it reads ESQ. ATP is bound by residues aspartate 501 and glycine 538. Asparagine 539 is a Mg(2+) binding site. Serine 541 is a substrate binding site.

It belongs to the FGAMS family. Monomer. Part of the FGAM synthase complex composed of 1 PurL, 1 PurQ and 2 PurS subunits.

It is found in the cytoplasm. The catalysed reaction is N(2)-formyl-N(1)-(5-phospho-beta-D-ribosyl)glycinamide + L-glutamine + ATP + H2O = 2-formamido-N(1)-(5-O-phospho-beta-D-ribosyl)acetamidine + L-glutamate + ADP + phosphate + H(+). Its pathway is purine metabolism; IMP biosynthesis via de novo pathway; 5-amino-1-(5-phospho-D-ribosyl)imidazole from N(2)-formyl-N(1)-(5-phospho-D-ribosyl)glycinamide: step 1/2. In terms of biological role, part of the phosphoribosylformylglycinamidine synthase complex involved in the purines biosynthetic pathway. Catalyzes the ATP-dependent conversion of formylglycinamide ribonucleotide (FGAR) and glutamine to yield formylglycinamidine ribonucleotide (FGAM) and glutamate. The FGAM synthase complex is composed of three subunits. PurQ produces an ammonia molecule by converting glutamine to glutamate. PurL transfers the ammonia molecule to FGAR to form FGAM in an ATP-dependent manner. PurS interacts with PurQ and PurL and is thought to assist in the transfer of the ammonia molecule from PurQ to PurL. The polypeptide is Phosphoribosylformylglycinamidine synthase subunit PurL (Lactobacillus delbrueckii subsp. bulgaricus (strain ATCC 11842 / DSM 20081 / BCRC 10696 / JCM 1002 / NBRC 13953 / NCIMB 11778 / NCTC 12712 / WDCM 00102 / Lb 14)).